A 145-amino-acid polypeptide reads, in one-letter code: D-aminoacyl-tRNA deacylase (145 aa).

Residues 137-138 (GP) carry the Gly-cisPro motif, important for rejection of L-amino acids motif.

This sequence belongs to the DTD family. Homodimer.

It is found in the cytoplasm. The catalysed reaction is glycyl-tRNA(Ala) + H2O = tRNA(Ala) + glycine + H(+). The enzyme catalyses a D-aminoacyl-tRNA + H2O = a tRNA + a D-alpha-amino acid + H(+). In terms of biological role, an aminoacyl-tRNA editing enzyme that deacylates mischarged D-aminoacyl-tRNAs. Also deacylates mischarged glycyl-tRNA(Ala), protecting cells against glycine mischarging by AlaRS. Acts via tRNA-based rather than protein-based catalysis; rejects L-amino acids rather than detecting D-amino acids in the active site. By recycling D-aminoacyl-tRNA to D-amino acids and free tRNA molecules, this enzyme counteracts the toxicity associated with the formation of D-aminoacyl-tRNA entities in vivo and helps enforce protein L-homochirality. In Salmonella enteritidis PT4 (strain P125109), this protein is D-aminoacyl-tRNA deacylase.